Consider the following 59-residue polypeptide: Large ribosomal subunit protein bL32 (59 aa).

This sequence belongs to the bacterial ribosomal protein bL32 family.

The polypeptide is Large ribosomal subunit protein bL32 (Rhizorhabdus wittichii (strain DSM 6014 / CCUG 31198 / JCM 15750 / NBRC 105917 / EY 4224 / RW1) (Sphingomonas wittichii)).